A 388-amino-acid polypeptide reads, in one-letter code: Succinate--CoA ligase [ADP-forming] subunit beta (388 aa).

Residues 9–244 (KQLFAEYGLP…PSQDDPREAH (236 aa)) form the ATP-grasp domain. ATP-binding positions include Lys46, 53 to 55 (GRG), Glu99, Thr102, and Glu107. The Mg(2+) site is built by Asn199 and Asp213. Residues Asn264 and 321-323 (GIV) contribute to the substrate site.

The protein belongs to the succinate/malate CoA ligase beta subunit family. In terms of assembly, heterotetramer of two alpha and two beta subunits. The cofactor is Mg(2+).

It catalyses the reaction succinate + ATP + CoA = succinyl-CoA + ADP + phosphate. It carries out the reaction GTP + succinate + CoA = succinyl-CoA + GDP + phosphate. It participates in carbohydrate metabolism; tricarboxylic acid cycle; succinate from succinyl-CoA (ligase route): step 1/1. In terms of biological role, succinyl-CoA synthetase functions in the citric acid cycle (TCA), coupling the hydrolysis of succinyl-CoA to the synthesis of either ATP or GTP and thus represents the only step of substrate-level phosphorylation in the TCA. The beta subunit provides nucleotide specificity of the enzyme and binds the substrate succinate, while the binding sites for coenzyme A and phosphate are found in the alpha subunit. The protein is Succinate--CoA ligase [ADP-forming] subunit beta of Aeromonas hydrophila subsp. hydrophila (strain ATCC 7966 / DSM 30187 / BCRC 13018 / CCUG 14551 / JCM 1027 / KCTC 2358 / NCIMB 9240 / NCTC 8049).